The following is an 88-amino-acid chain: LYR motif-containing protein 2 (88 aa).

A mitochondrion-targeting transit peptide spans 1–19 (MATSRLPPATLTLKQFMRR).

Belongs to the complex I LYR family.

It is found in the mitochondrion. Its function is as follows. Involved in efficient integration of the N-module into mitochondrial respiratory chain complex I. This is LYR motif-containing protein 2 (LYRM2) from Bos taurus (Bovine).